A 398-amino-acid chain; its full sequence is MNIPSIENCDLHNKAVLLRVDFNVPIKDGEIRDVTRILRALPTIQYLVNASAKIIIISHFGRPKARDNNLSLKNVIDTLSQLLNKKVKFIDDCVGEKVQKAVSAMDAGDIILLENLRFYEGEKENDANFARQLASLADIYVNDAFSCSHRAHASISRITEFLPSYAGFCLQDELKYLEKAVSFKAKPITAIVGGAKISTKIKVLMKLTEKVDYLVLGGAIANNFLSFSKVNIGKSFFQNGVDDLLHNIVETANKNNCKIVVPEDVLVAVNSDYSTSISRKTESILDGDIILDIGSQTLSTISSIIASSKTLLWNGPIGVFEHSAFASGTIGVMKIVSDLTHKGKLTSIIGGGDSLSAISAAGLTDKDFTYVSTGGGAFLDWLSGDEMPGVAALQKRLD.

Substrate is bound by residues 21–23 (DFN), arginine 36, 59–62 (HFGR), arginine 117, and arginine 150. ATP-binding positions include lysine 200, glutamate 321, and 351–354 (GGDS).

This sequence belongs to the phosphoglycerate kinase family. In terms of assembly, monomer.

It localises to the cytoplasm. The catalysed reaction is (2R)-3-phosphoglycerate + ATP = (2R)-3-phospho-glyceroyl phosphate + ADP. The protein operates within carbohydrate degradation; glycolysis; pyruvate from D-glyceraldehyde 3-phosphate: step 2/5. This is Phosphoglycerate kinase from Wolbachia sp. subsp. Drosophila simulans (strain wRi).